A 426-amino-acid polypeptide reads, in one-letter code: Gamma-glutamyl phosphate reductase (426 aa).

It belongs to the gamma-glutamyl phosphate reductase family.

It localises to the cytoplasm. It catalyses the reaction L-glutamate 5-semialdehyde + phosphate + NADP(+) = L-glutamyl 5-phosphate + NADPH + H(+). The protein operates within amino-acid biosynthesis; L-proline biosynthesis; L-glutamate 5-semialdehyde from L-glutamate: step 2/2. Catalyzes the NADPH-dependent reduction of L-glutamate 5-phosphate into L-glutamate 5-semialdehyde and phosphate. The product spontaneously undergoes cyclization to form 1-pyrroline-5-carboxylate. The polypeptide is Gamma-glutamyl phosphate reductase (Cupriavidus taiwanensis (strain DSM 17343 / BCRC 17206 / CCUG 44338 / CIP 107171 / LMG 19424 / R1) (Ralstonia taiwanensis (strain LMG 19424))).